A 159-amino-acid chain; its full sequence is SsrA-binding protein (159 aa).

The protein belongs to the SmpB family.

The protein localises to the cytoplasm. Its function is as follows. Required for rescue of stalled ribosomes mediated by trans-translation. Binds to transfer-messenger RNA (tmRNA), required for stable association of tmRNA with ribosomes. tmRNA and SmpB together mimic tRNA shape, replacing the anticodon stem-loop with SmpB. tmRNA is encoded by the ssrA gene; the 2 termini fold to resemble tRNA(Ala) and it encodes a 'tag peptide', a short internal open reading frame. During trans-translation Ala-aminoacylated tmRNA acts like a tRNA, entering the A-site of stalled ribosomes, displacing the stalled mRNA. The ribosome then switches to translate the ORF on the tmRNA; the nascent peptide is terminated with the 'tag peptide' encoded by the tmRNA and targeted for degradation. The ribosome is freed to recommence translation, which seems to be the essential function of trans-translation. This Coxiella burnetii (strain RSA 493 / Nine Mile phase I) protein is SsrA-binding protein.